We begin with the raw amino-acid sequence, 310 residues long: ADP-L-glycero-D-manno-heptose-6-epimerase (310 aa).

Residues 10–11 (FI), 31–32 (DN), K38, K53, 75–79 (EGACS), and N92 contribute to the NADP(+) site. Y140 (proton acceptor) is an active-site residue. K144 is a binding site for NADP(+). Residue N169 participates in substrate binding. Residues V170 and K178 each contribute to the NADP(+) site. K178 serves as the catalytic Proton acceptor. Residues S180, H187, 201 to 204 (FEGS), R209, and Y272 contribute to the substrate site.

It belongs to the NAD(P)-dependent epimerase/dehydratase family. HldD subfamily. In terms of assembly, homopentamer. NADP(+) is required as a cofactor.

The catalysed reaction is ADP-D-glycero-beta-D-manno-heptose = ADP-L-glycero-beta-D-manno-heptose. It participates in nucleotide-sugar biosynthesis; ADP-L-glycero-beta-D-manno-heptose biosynthesis; ADP-L-glycero-beta-D-manno-heptose from D-glycero-beta-D-manno-heptose 7-phosphate: step 4/4. In terms of biological role, catalyzes the interconversion between ADP-D-glycero-beta-D-manno-heptose and ADP-L-glycero-beta-D-manno-heptose via an epimerization at carbon 6 of the heptose. In Salmonella arizonae (strain ATCC BAA-731 / CDC346-86 / RSK2980), this protein is ADP-L-glycero-D-manno-heptose-6-epimerase.